We begin with the raw amino-acid sequence, 193 residues long: Holliday junction branch migration complex subunit RuvA (193 aa).

The tract at residues 1 to 63 (MIAHIQGKLV…EDSHSLYGFA (63 aa)) is domain I. Residues 64–142 (EKSEKEIFKL…KLYDLDQVSI (79 aa)) form a domain II region. Positions 143–145 (SQS) are flexible linker. Positions 145-193 (SNTNKDEALSALEVLGFIRKSAEKVVEKIVATMPDATVETIIKQALKNL) are domain III.

Belongs to the RuvA family. In terms of assembly, homotetramer. Forms an RuvA(8)-RuvB(12)-Holliday junction (HJ) complex. HJ DNA is sandwiched between 2 RuvA tetramers; dsDNA enters through RuvA and exits via RuvB. An RuvB hexamer assembles on each DNA strand where it exits the tetramer. Each RuvB hexamer is contacted by two RuvA subunits (via domain III) on 2 adjacent RuvB subunits; this complex drives branch migration. In the full resolvosome a probable DNA-RuvA(4)-RuvB(12)-RuvC(2) complex forms which resolves the HJ.

The protein localises to the cytoplasm. Functionally, the RuvA-RuvB-RuvC complex processes Holliday junction (HJ) DNA during genetic recombination and DNA repair, while the RuvA-RuvB complex plays an important role in the rescue of blocked DNA replication forks via replication fork reversal (RFR). RuvA specifically binds to HJ cruciform DNA, conferring on it an open structure. The RuvB hexamer acts as an ATP-dependent pump, pulling dsDNA into and through the RuvAB complex. HJ branch migration allows RuvC to scan DNA until it finds its consensus sequence, where it cleaves and resolves the cruciform DNA. This chain is Holliday junction branch migration complex subunit RuvA, found in Flavobacterium psychrophilum (strain ATCC 49511 / DSM 21280 / CIP 103535 / JIP02/86).